Reading from the N-terminus, the 331-residue chain is Activator of 90 kDa heat shock protein ATPase homolog 2 (331 aa).

Belongs to the AHA1 family.

Its function is as follows. Co-chaperone that stimulates HSP90 ATPase activity. In Mus musculus (Mouse), this protein is Activator of 90 kDa heat shock protein ATPase homolog 2 (Ahsa2).